We begin with the raw amino-acid sequence, 143 residues long: Cofilin (143 aa).

In terms of domain architecture, ADF-H spans glycine 5 to serine 137.

It belongs to the actin-binding proteins ADF family.

It is found in the cytoplasm. The protein resides in the cytoskeleton. Its subcellular location is the nucleus matrix. Its function is as follows. Controls reversibly actin polymerization and depolymerization in a pH-sensitive manner. It has the ability to bind G- and F-actin in a 1:1 ratio of cofilin to actin. Binding to F-actin is regulated by tropomyosin. It is the major component of intranuclear and cytoplasmic actin rods. Required for accumulation of actin at the cell division site via depolymerizing actin at the cell ends. In association with myosin II has a role in the assembly of the contractile ring via severing actin filaments. Involved in the maintenance of the contractile ring once formed. In association with profilin and capping protein, has a role in the mitotic reorganization of the actin cytoskeleton. The sequence is that of Cofilin (COF1) from Eremothecium gossypii (strain ATCC 10895 / CBS 109.51 / FGSC 9923 / NRRL Y-1056) (Yeast).